A 209-amino-acid polypeptide reads, in one-letter code: dITP/XTP pyrophosphatase (209 aa).

Substrate is bound at residue 22-27 (SHNQGK). Asp83 acts as the Proton acceptor in catalysis. Asp83 serves as a coordination point for Mg(2+). Substrate is bound by residues Ser84, 167 to 170 (FGYD), Lys190, and 195 to 196 (HR).

This sequence belongs to the HAM1 NTPase family. As to quaternary structure, homodimer. Mg(2+) serves as cofactor.

It catalyses the reaction XTP + H2O = XMP + diphosphate + H(+). The catalysed reaction is dITP + H2O = dIMP + diphosphate + H(+). The enzyme catalyses ITP + H2O = IMP + diphosphate + H(+). In terms of biological role, pyrophosphatase that catalyzes the hydrolysis of nucleoside triphosphates to their monophosphate derivatives, with a high preference for the non-canonical purine nucleotides XTP (xanthosine triphosphate), dITP (deoxyinosine triphosphate) and ITP. Seems to function as a house-cleaning enzyme that removes non-canonical purine nucleotides from the nucleotide pool, thus preventing their incorporation into DNA/RNA and avoiding chromosomal lesions. This is dITP/XTP pyrophosphatase from Zymomonas mobilis subsp. mobilis (strain ATCC 31821 / ZM4 / CP4).